The following is a 379-amino-acid chain: Homoserine O-succinyltransferase (379 aa).

The 310-residue stretch at Asn51–Leu360 folds into the AB hydrolase-1 domain. Ser157 serves as the catalytic Nucleophile. Arg227 lines the substrate pocket. Catalysis depends on residues Asp323 and His356. Asp357 contributes to the substrate binding site.

It belongs to the AB hydrolase superfamily. MetX family. In terms of assembly, homodimer.

It localises to the cytoplasm. The catalysed reaction is L-homoserine + succinyl-CoA = O-succinyl-L-homoserine + CoA. It participates in amino-acid biosynthesis; L-methionine biosynthesis via de novo pathway; O-succinyl-L-homoserine from L-homoserine: step 1/1. Its function is as follows. Transfers a succinyl group from succinyl-CoA to L-homoserine, forming succinyl-L-homoserine. In Pseudomonas savastanoi pv. phaseolicola (strain 1448A / Race 6) (Pseudomonas syringae pv. phaseolicola (strain 1448A / Race 6)), this protein is Homoserine O-succinyltransferase.